Consider the following 543-residue polypeptide: Carboxypeptidase Y homolog A (543 aa).

Positions 1–17 (MRVLPATLLVGAATAAV) are cleaved as a signal peptide. The propeptide occupies 18–124 (PPFQQILGLP…KLEAYDLRVK (107 aa)). 5 disulfides stabilise this stretch: Cys179–Cys419, Cys313–Cys327, Cys337–Cys360, Cys344–Cys353, and Cys382–Cys389. Asn210 carries an N-linked (GlcNAc...) asparagine glycan. Ser266 is an active-site residue. The active site involves Asp458. A glycan (N-linked (GlcNAc...) asparagine) is linked at Asn509. His520 is a catalytic residue.

The protein belongs to the peptidase S10 family.

The protein resides in the vacuole. The enzyme catalyses Release of a C-terminal amino acid with broad specificity.. In terms of biological role, vacuolar carboxypeptidase involved in degradation of small peptides. Digests preferentially peptides containing an aliphatic or hydrophobic residue in P1' position, as well as methionine, leucine or phenylalanine in P1 position of ester substrate. The protein is Carboxypeptidase Y homolog A (cpyA) of Aspergillus clavatus (strain ATCC 1007 / CBS 513.65 / DSM 816 / NCTC 3887 / NRRL 1 / QM 1276 / 107).